The following is a 794-amino-acid chain: Zinc finger Y-chromosomal protein 1 (794 aa).

The Nuclear localization signal motif lies at T380–R389. C2H2-type zinc fingers lie at residues Y411–H433, Y442–H464, L477–H499, H508–H531, H537–H559, Y565–H588, F594–H616, H622–H645, H651–H673, H679–H702, Y708–H730, Y736–H759, and H765–H788.

This sequence belongs to the krueppel C2H2-type zinc-finger protein family. ZFX/ZFY subfamily.

It localises to the nucleus. Probable transcriptional activator. The protein is Zinc finger Y-chromosomal protein 1 (zfy1) of Xenopus laevis (African clawed frog).